The chain runs to 425 residues: Histidine--tRNA ligase (425 aa).

Belongs to the class-II aminoacyl-tRNA synthetase family. In terms of assembly, homodimer.

The protein localises to the cytoplasm. It catalyses the reaction tRNA(His) + L-histidine + ATP = L-histidyl-tRNA(His) + AMP + diphosphate + H(+). In Erwinia tasmaniensis (strain DSM 17950 / CFBP 7177 / CIP 109463 / NCPPB 4357 / Et1/99), this protein is Histidine--tRNA ligase.